The chain runs to 58 residues: Large ribosomal subunit protein bL32 (58 aa).

It belongs to the bacterial ribosomal protein bL32 family.

The protein is Large ribosomal subunit protein bL32 of Anaplasma marginale (strain Florida).